The chain runs to 322 residues: Mitochondrial uncoupling protein 4 (322 aa).

3 Solcar repeats span residues 20-114 (SKFL…LREV), 124-216 (YPLW…VKHY), and 225-316 (DNIS…IREM). The next 6 helical transmembrane spans lie at 22-39 (FLLSGCAATVAELATFPL), 87-108 (WQGVTPAIYRHVVYSGGRMVTY), 126-143 (LWKSVIGGMMAGVIGQFL), 194-211 (PNIQRAALVNMGDLTTYD), 228-247 (STHGLSSLCSGLVASILGTP), and 287-310 (SLYKGFLPSWLRMTPWSMVFWLTY).

This sequence belongs to the mitochondrial carrier (TC 2.A.29) family. Homotetramer.

The protein localises to the mitochondrion inner membrane. Its subcellular location is the cell projection. It localises to the neuron projection. The catalysed reaction is H(+)(in) = H(+)(out). The enzyme catalyses chloride(in) = chloride(out). Facilitates proton transport across the inner mitochondrial membrane and may dissipate excessive proton gradient associated with oxidative and metabolic stress at neuronal synapses. Regulates glutamate-induced proton conductance in astrocytes, shifting the energy metabolism toward aerobic glycolysis and lactate transfer to neurons for ATP synthesis. Can transport chloride ions with lower efficiency. The transport mechanism remains to be elucidated. The polypeptide is Mitochondrial uncoupling protein 4 (Mus musculus (Mouse)).